A 130-amino-acid polypeptide reads, in one-letter code: Histone H2A type 1 (130 aa).

Positions 1-22 are disordered; it reads MSGRGKQGGKARAKAKTRSSRA. Residue S2 is modified to N-acetylserine. Residue S2 is modified to Phosphoserine; by RPS6KA5. R4 bears the Citrulline; alternate mark. R4 carries the post-translational modification Symmetric dimethylarginine; by PRMT5; alternate. N6-(2-hydroxyisobutyryl)lysine is present on K6. The segment covering 7–19 has biased composition (basic residues); sequence QGGKARAKAKTRS. The residue at position 10 (K10) is an N6-(2-hydroxyisobutyryl)lysine; alternate. Residue K10 is modified to N6-lactoyllysine; alternate. K10 carries the post-translational modification N6-succinyllysine; alternate. Residues K14 and K16 each participate in a glycyl lysine isopeptide (Lys-Gly) (interchain with G-Cter in ubiquitin) cross-link. K37 is subject to N6-(2-hydroxyisobutyryl)lysine; alternate. N6-(beta-hydroxybutyryl)lysine; alternate is present on K37. The residue at position 37 (K37) is an N6-crotonyllysine; alternate. K75 and K76 each carry N6-(2-hydroxyisobutyryl)lysine. K96 bears the N6-(2-hydroxyisobutyryl)lysine; alternate mark. N6-succinyllysine; alternate is present on K96. K96 carries the N6-glutaryllysine; alternate modification. K100 bears the N6-glutaryllysine mark. Q105 is subject to N5-methylglutamine. N6-(2-hydroxyisobutyryl)lysine; alternate is present on K119. N6-crotonyllysine; alternate occurs at positions 119 and 120. K119 and K120 each carry N6-glutaryllysine; alternate. A Glycyl lysine isopeptide (Lys-Gly) (interchain with G-Cter in ubiquitin); alternate cross-link involves residue K120. T121 bears the Phosphothreonine; by DCAF1 mark. K126 carries the N6-crotonyllysine; alternate modification. N6-glutaryllysine; alternate is present on K126.

This sequence belongs to the histone H2A family. In terms of assembly, the nucleosome is a histone octamer containing two molecules each of H2A, H2B, H3 and H4 assembled in one H3-H4 heterotetramer and two H2A-H2B heterodimers. The octamer wraps approximately 147 bp of DNA. Interacts with VRK1; the interaction is mediated by the nucleosome acidic patch, a cluster of negatively charged residues of H2A and H2B forming a cleft within the nucleosome core. In terms of processing, deiminated on Arg-4 in granulocytes upon calcium entry. Monoubiquitination of Lys-120 (H2AK119Ub) by RING1, TRIM37 and RNF2/RING2 complex gives a specific tag for epigenetic transcriptional repression and participates in X chromosome inactivation of female mammals. It is involved in the initiation of both imprinted and random X inactivation. Ubiquitinated H2A is enriched in inactive X chromosome chromatin. Ubiquitination of H2A functions downstream of methylation of 'Lys-27' of histone H3 (H3K27me). H2AK119Ub by RNF2/RING2 can also be induced by ultraviolet and may be involved in DNA repair. Following DNA double-strand breaks (DSBs), it is ubiquitinated through 'Lys-63' linkage of ubiquitin moieties by the E2 ligase UBE2N and the E3 ligases RNF8 and RNF168, leading to the recruitment of repair proteins to sites of DNA damage. Ubiquitination at Lys-14 and Lys-16 (H2AK13Ub and H2AK15Ub, respectively) in response to DNA damage is initiated by RNF168 that mediates monoubiquitination at these 2 sites, and 'Lys-63'-linked ubiquitin are then conjugated to monoubiquitin; RNF8 is able to extend 'Lys-63'-linked ubiquitin chains in vitro. H2AK119Ub and ionizing radiation-induced 'Lys-63'-linked ubiquitination (H2AK13Ub and H2AK15Ub) are distinct events. Post-translationally, phosphorylation on Ser-2 (H2AS1ph) is enhanced during mitosis. Phosphorylation on Ser-2 by RPS6KA5/MSK1 directly represses transcription. Acetylation of H3 inhibits Ser-2 phosphorylation by RPS6KA5/MSK1. Phosphorylation at Thr-121 (H2AT120ph) by DCAF1 is present in the regulatory region of many tumor suppresor genes and down-regulates their transcription. In terms of processing, symmetric dimethylation on Arg-4 by the PRDM1/PRMT5 complex may play a crucial role in the germ-cell lineage. Glutamine methylation at Gln-105 (H2AQ104me) by FBL is specifically dedicated to polymerase I. It is present at 35S ribosomal DNA locus and impairs binding of the FACT complex. Post-translationally, crotonylation (Kcr) is specifically present in male germ cells and marks testis-specific genes in post-meiotic cells, including X-linked genes that escape sex chromosome inactivation in haploid cells. Crotonylation marks active promoters and enhancers and confers resistance to transcriptional repressors. It is also associated with post-meiotically activated genes on autosomes. In terms of processing, lactylated in macrophages by EP300/P300 by using lactoyl-CoA directly derived from endogenous or exogenous lactate, leading to stimulates gene transcription.

It is found in the nucleus. The protein resides in the chromosome. Core component of nucleosome. Nucleosomes wrap and compact DNA into chromatin, limiting DNA accessibility to the cellular machineries which require DNA as a template. Histones thereby play a central role in transcription regulation, DNA repair, DNA replication and chromosomal stability. DNA accessibility is regulated via a complex set of post-translational modifications of histones, also called histone code, and nucleosome remodeling. The polypeptide is Histone H2A type 1 (Bos taurus (Bovine)).